A 258-amino-acid chain; its full sequence is Global transcriptional regulator CodY (258 aa).

The segment at 1 to 156 (MSSLLDKTRM…SATIIGLEIL (156 aa)) is GAF domain. Residues 204–223 (ASKIADKVGITRSVIVNALR) constitute a DNA-binding region (H-T-H motif).

Belongs to the CodY family.

It localises to the cytoplasm. Its function is as follows. DNA-binding global transcriptional regulator which is involved in the adaptive response to starvation and acts by directly or indirectly controlling the expression of numerous genes in response to nutrient availability. During rapid exponential growth, CodY is highly active and represses genes whose products allow adaptation to nutrient depletion. The sequence is that of Global transcriptional regulator CodY from Clostridium botulinum (strain ATCC 19397 / Type A).